Reading from the N-terminus, the 184-residue chain is Regulatory protein RecX (184 aa).

The disordered stretch occupies residues M1–R21.

Belongs to the RecX family.

Its subcellular location is the cytoplasm. In terms of biological role, modulates RecA activity. The chain is Regulatory protein RecX from Mycolicibacterium vanbaalenii (strain DSM 7251 / JCM 13017 / BCRC 16820 / KCTC 9966 / NRRL B-24157 / PYR-1) (Mycobacterium vanbaalenii).